An 877-amino-acid polypeptide reads, in one-letter code: TSET complex member tstB (877 aa).

2 disordered regions span residues 398–437 and 522–557; these read HLHHYHQGGSGTVGGSVPSSSSSSSSSSNITTSALSSGSS and TGLPNPISNNNNSSNNTKDQSTTTTTSTTSSSSNSI. Low complexity-rich tracts occupy residues 412 to 437 and 529 to 556; these read GSVPSSSSSSSSSSNITTSALSSGSS and SNNNNSSNNTKDQSTTTTTSTTSSSSNS.

In terms of assembly, component of the TSET complex, a heterohexamer composed of tstA, tstB, tstC, tstD, tstE and tstF, which may act in plasma membrane turnover. tstA, tstB, tstC and tstD are likely to be the core complex members with tstE and tstF acting as associated scaffold proteins.

This Dictyostelium discoideum (Social amoeba) protein is TSET complex member tstB.